A 253-amino-acid chain; its full sequence is Tryptophan synthase alpha chain (253 aa).

Catalysis depends on proton acceptor residues Glu48 and Asp59.

This sequence belongs to the TrpA family. In terms of assembly, tetramer of two alpha and two beta chains.

It carries out the reaction (1S,2R)-1-C-(indol-3-yl)glycerol 3-phosphate + L-serine = D-glyceraldehyde 3-phosphate + L-tryptophan + H2O. The protein operates within amino-acid biosynthesis; L-tryptophan biosynthesis; L-tryptophan from chorismate: step 5/5. In terms of biological role, the alpha subunit is responsible for the aldol cleavage of indoleglycerol phosphate to indole and glyceraldehyde 3-phosphate. The protein is Tryptophan synthase alpha chain of Caldicellulosiruptor saccharolyticus (strain ATCC 43494 / DSM 8903 / Tp8T 6331).